A 377-amino-acid polypeptide reads, in one-letter code: Nitric oxide reductase FlRd-NAD(+) reductase (377 aa).

It belongs to the FAD-dependent oxidoreductase family. It depends on FAD as a cofactor.

Its subcellular location is the cytoplasm. It carries out the reaction 2 reduced [nitric oxide reductase rubredoxin domain] + NAD(+) + H(+) = 2 oxidized [nitric oxide reductase rubredoxin domain] + NADH. It participates in nitrogen metabolism; nitric oxide reduction. Its function is as follows. One of at least two accessory proteins for anaerobic nitric oxide (NO) reductase. Reduces the rubredoxin moiety of NO reductase. The chain is Nitric oxide reductase FlRd-NAD(+) reductase from Salmonella typhimurium (strain LT2 / SGSC1412 / ATCC 700720).